Reading from the N-terminus, the 351-residue chain is Histidinol-phosphate aminotransferase (351 aa).

Residue lysine 213 is modified to N6-(pyridoxal phosphate)lysine.

It belongs to the class-II pyridoxal-phosphate-dependent aminotransferase family. Histidinol-phosphate aminotransferase subfamily. Homodimer. Pyridoxal 5'-phosphate serves as cofactor.

The catalysed reaction is L-histidinol phosphate + 2-oxoglutarate = 3-(imidazol-4-yl)-2-oxopropyl phosphate + L-glutamate. Its pathway is amino-acid biosynthesis; L-histidine biosynthesis; L-histidine from 5-phospho-alpha-D-ribose 1-diphosphate: step 7/9. This Clostridium kluyveri (strain NBRC 12016) protein is Histidinol-phosphate aminotransferase.